Here is a 161-residue protein sequence, read N- to C-terminus: Peptidyl-prolyl cis-trans isomerase 10 (161 aa).

One can recognise a PPIase cyclophilin-type domain in the interval 1-153; it reads MSVTLHTTSG…VQQKIQNVTI (153 aa).

It belongs to the cyclophilin-type PPIase family. PPIL3 subfamily.

It carries out the reaction [protein]-peptidylproline (omega=180) = [protein]-peptidylproline (omega=0). PPIases accelerate the folding of proteins. It catalyzes the cis-trans isomerization of proline imidic peptide bonds in oligopeptides. The polypeptide is Peptidyl-prolyl cis-trans isomerase 10 (cyn-10) (Caenorhabditis elegans).